The chain runs to 360 residues: MVWLRLWAFLHILAIVTLDPELKRREELFLRSLGFSSKPNPVSPPPVPSILWRIFNQRMGSSIQKKKPDLCFVEEFNVPGSVIRVFPDQGRFIIPYSDDIHPTQCLEKRLFFNISAIEKEERVTMGSGIEVQPEHLLRKGIDLRLYRTLQITLKGMGRSKTSRKLLVAQTFRLLHKSLFFNLTEICQSWQDPLKNLGLVLEIFPKKESSWMSTANDECKDIQTFLYTSLLTVTLNPLRCKRPRRKRSYSKLPFTASNICKKRHLYVEFKDVGWQNWVIAPQGYMANYCYGECPYPLTEILNGSNHAILQTLVHSIEPEDIPLPCCVPTKMSPISMLFYDNNDNVVLRHYENMAVDECGCR.

The N-terminal stretch at 1–16 (MVWLRLWAFLHILAIV) is a signal peptide. Residues 17 to 246 (TLDPELKRRE…LRCKRPRRKR (230 aa)) constitute a propeptide that is removed on maturation. 3 N-linked (GlcNAc...) asparagine glycosylation sites follow: Asn-113, Asn-181, and Asn-301. Intrachain disulfides connect Cys-259–Cys-325, Cys-288–Cys-357, and Cys-292–Cys-359.

It belongs to the TGF-beta family. Homodimer. Vegetal region of the egg.

Its subcellular location is the secreted. Its function is as follows. Serves to facilitate the differentiation of either mesoderm or endoderm either as a cofactor in an instructive signal or by providing permissive environment. The chain is Protein DVR-1 (dvr1) from Xenopus laevis (African clawed frog).